A 61-amino-acid polypeptide reads, in one-letter code: Probable tautomerase spyM18_1099 (61 aa).

P2 (proton acceptor; via imino nitrogen) is an active-site residue.

Belongs to the 4-oxalocrotonate tautomerase family.

The polypeptide is Probable tautomerase spyM18_1099 (Streptococcus pyogenes serotype M18 (strain MGAS8232)).